The following is a 48-amino-acid chain: MPQLIPFYFMNQLTYGLLLITVLLILFSQFFLPMILRLYVSRLFISKL.

A helical membrane pass occupies residues Gln12–Leu32.

Belongs to the ATPase protein 8 family. As to quaternary structure, F-type ATPases have 2 components, CF(1) - the catalytic core - and CF(0) - the membrane proton channel.

The protein localises to the mitochondrion membrane. Its function is as follows. Mitochondrial membrane ATP synthase (F(1)F(0) ATP synthase or Complex V) produces ATP from ADP in the presence of a proton gradient across the membrane which is generated by electron transport complexes of the respiratory chain. F-type ATPases consist of two structural domains, F(1) - containing the extramembraneous catalytic core and F(0) - containing the membrane proton channel, linked together by a central stalk and a peripheral stalk. During catalysis, ATP synthesis in the catalytic domain of F(1) is coupled via a rotary mechanism of the central stalk subunits to proton translocation. Part of the complex F(0) domain. Minor subunit located with subunit a in the membrane. In Candida glabrata (strain ATCC 2001 / BCRC 20586 / JCM 3761 / NBRC 0622 / NRRL Y-65 / CBS 138) (Yeast), this protein is ATP synthase protein 8 (ATP8).